A 462-amino-acid polypeptide reads, in one-letter code: Bifunctional protein HldE (462 aa).

The interval 1 to 309 is ribokinase; it reads MKPRILVLGD…EYERSIRKAP (309 aa). An ATP-binding site is contributed by 186–189; it reads NKKE. The active site involves aspartate 254. The tract at residues 336-462 is cytidylyltransferase; the sequence is FTNGCFDILH…TAIVERMRSC (127 aa).

The protein in the N-terminal section; belongs to the carbohydrate kinase PfkB family. This sequence in the C-terminal section; belongs to the cytidylyltransferase family. As to quaternary structure, homodimer.

It carries out the reaction D-glycero-beta-D-manno-heptose 7-phosphate + ATP = D-glycero-beta-D-manno-heptose 1,7-bisphosphate + ADP + H(+). The catalysed reaction is D-glycero-beta-D-manno-heptose 1-phosphate + ATP + H(+) = ADP-D-glycero-beta-D-manno-heptose + diphosphate. Its pathway is nucleotide-sugar biosynthesis; ADP-L-glycero-beta-D-manno-heptose biosynthesis; ADP-L-glycero-beta-D-manno-heptose from D-glycero-beta-D-manno-heptose 7-phosphate: step 1/4. The protein operates within nucleotide-sugar biosynthesis; ADP-L-glycero-beta-D-manno-heptose biosynthesis; ADP-L-glycero-beta-D-manno-heptose from D-glycero-beta-D-manno-heptose 7-phosphate: step 3/4. In terms of biological role, catalyzes the phosphorylation of D-glycero-D-manno-heptose 7-phosphate at the C-1 position to selectively form D-glycero-beta-D-manno-heptose-1,7-bisphosphate. Functionally, catalyzes the ADP transfer from ATP to D-glycero-beta-D-manno-heptose 1-phosphate, yielding ADP-D-glycero-beta-D-manno-heptose. The polypeptide is Bifunctional protein HldE (Nitratiruptor sp. (strain SB155-2)).